Consider the following 215-residue polypeptide: 3-dehydroquinate dehydratase (215 aa).

Residues 27–29 (EVR) and arginine 54 each bind 3-dehydroquinate. Catalysis depends on histidine 112, which acts as the Proton donor/acceptor. Residue lysine 139 is the Schiff-base intermediate with substrate of the active site. Residues arginine 176 and glutamine 198 each contribute to the 3-dehydroquinate site.

Belongs to the type-I 3-dehydroquinase family. Homodimer.

It catalyses the reaction 3-dehydroquinate = 3-dehydroshikimate + H2O. It functions in the pathway metabolic intermediate biosynthesis; chorismate biosynthesis; chorismate from D-erythrose 4-phosphate and phosphoenolpyruvate: step 3/7. Its function is as follows. Involved in the third step of the chorismate pathway, which leads to the biosynthesis of aromatic amino acids. Catalyzes the cis-dehydration of 3-dehydroquinate (DHQ) and introduces the first double bond of the aromatic ring to yield 3-dehydroshikimate. This Thermococcus onnurineus (strain NA1) protein is 3-dehydroquinate dehydratase.